Reading from the N-terminus, the 508-residue chain is Cobyric acid synthase (508 aa).

The GATase cobBQ-type domain maps to 255–454; that stretch reads ELNIAVLKLP…LHGVFESGPW (200 aa). The Nucleophile role is filled by cysteine 336. Histidine 446 is a catalytic residue.

Belongs to the CobB/CobQ family. CobQ subfamily.

Its pathway is cofactor biosynthesis; adenosylcobalamin biosynthesis. Catalyzes amidations at positions B, D, E, and G on adenosylcobyrinic A,C-diamide. NH(2) groups are provided by glutamine, and one molecule of ATP is hydrogenolyzed for each amidation. The sequence is that of Cobyric acid synthase from Synechococcus sp. (strain CC9311).